The chain runs to 249 residues: MTLSEESHLPKHVAIIMDGNNRFAKKNQMQKGDGHREGKNSLDPIVEHCCTRGVQALTVFAFSSENWNRPAFEVDLLMKLLEEAIHEQLPRMRKFNIALRFIGDRSKLSEHLTDLMTHAENETAHFTSMTLTIAISYGGMWDITDAAKQIAKDVSDGIVDIEQIDTHLFGRYVSLNQLPPVDLLIRTGGDYRLSNFLLWQAAYAELYFTETLWPEFSIDEFDHALAVFAGRERRFGKTSEQIQQDKIEN.

D18 is a catalytic residue. D18 lines the Mg(2+) pocket. Substrate is bound by residues 19–22, F23, K31, H35, and 63–65; these read GNNR and SSE. N66 functions as the Proton acceptor in the catalytic mechanism. Residues W67, R69, R186, and 192–194 each bind substrate; that span reads RLS. Position 205 (E205) interacts with Mg(2+).

Belongs to the UPP synthase family. As to quaternary structure, homodimer. Mg(2+) serves as cofactor.

The enzyme catalyses 8 isopentenyl diphosphate + (2E,6E)-farnesyl diphosphate = di-trans,octa-cis-undecaprenyl diphosphate + 8 diphosphate. Functionally, catalyzes the sequential condensation of isopentenyl diphosphate (IPP) with (2E,6E)-farnesyl diphosphate (E,E-FPP) to yield (2Z,6Z,10Z,14Z,18Z,22Z,26Z,30Z,34E,38E)-undecaprenyl diphosphate (di-trans,octa-cis-UPP). UPP is the precursor of glycosyl carrier lipid in the biosynthesis of bacterial cell wall polysaccharide components such as peptidoglycan and lipopolysaccharide. In Acinetobacter baylyi (strain ATCC 33305 / BD413 / ADP1), this protein is Ditrans,polycis-undecaprenyl-diphosphate synthase ((2E,6E)-farnesyl-diphosphate specific).